The sequence spans 289 residues: Shikimate dehydrogenase (NADP(+)) (289 aa).

Shikimate-binding positions include 19-21 (SLS) and Thr-66. Lys-70 acts as the Proton acceptor in catalysis. Positions 91 and 106 each coordinate shikimate. NADP(+) contacts are provided by residues 131–135 (GNGGA) and Leu-229. Tyr-231 serves as a coordination point for shikimate. Gly-252 serves as a coordination point for NADP(+).

This sequence belongs to the shikimate dehydrogenase family. In terms of assembly, homodimer.

It carries out the reaction shikimate + NADP(+) = 3-dehydroshikimate + NADPH + H(+). The protein operates within metabolic intermediate biosynthesis; chorismate biosynthesis; chorismate from D-erythrose 4-phosphate and phosphoenolpyruvate: step 4/7. Involved in the biosynthesis of the chorismate, which leads to the biosynthesis of aromatic amino acids. Catalyzes the reversible NADPH linked reduction of 3-dehydroshikimate (DHSA) to yield shikimate (SA). This Nostoc sp. (strain PCC 7120 / SAG 25.82 / UTEX 2576) protein is Shikimate dehydrogenase (NADP(+)).